The following is a 487-amino-acid chain: MAEEQREISHENNVSLGSAETAIPLTNVSISPTKKEEQKTVYLVLFGRTIYVESSSLESEETVMPIVDVPKSPAKEDLTTHCSLDAESSEKGFPVDPYMGILGNNPNINSNVTCAGNKDLTEDIIKFKKMRSLSKEKIVEEKGTRVLTELPPYTWTIKKTLKESDINHQCRLLLNTTDAENHIMRHLPTDDQKKIQEGIGVDVKAYDHDTYTEHDMVFKRHVKTSKSYVFNGGWAKAFVGRRELKEGDKIGLFWAKKSQTFMSQEQQGTSPLNTDEALKSHHSFSQNPNYIESNLSRRYQTNFSLGSQRISGQFLMIPNPGFVDTSSMTNTHDTSLANFQTVPTTTNPKIILKEEKENEEEQQYWTIKKELTKSDACQRLTLSKSSVEEHILKHLLPEDSQKIDKGKPGITVKVYDNDTDTEHELCLAFQCSYVLKNGWVKTFVKRRGLEEGDMIGLFWECSTSKLHFSVLFRVNAKAPAAEEKEAY.

2 DNA-binding regions (TF-B3) span residues 171–269 (RLLL…QQGT) and 379–474 (RLTL…LFRV).

The protein localises to the nucleus. The polypeptide is Putative B3 domain-containing protein At1g78640 (Arabidopsis thaliana (Mouse-ear cress)).